We begin with the raw amino-acid sequence, 186 residues long: Peptidyl-tRNA hydrolase (186 aa).

Residue tyrosine 16 participates in tRNA binding. Histidine 21 (proton acceptor) is an active-site residue. The tRNA site is built by tyrosine 60 and asparagine 62.

Belongs to the PTH family. As to quaternary structure, monomer.

Its subcellular location is the cytoplasm. It carries out the reaction an N-acyl-L-alpha-aminoacyl-tRNA + H2O = an N-acyl-L-amino acid + a tRNA + H(+). Its function is as follows. Hydrolyzes ribosome-free peptidyl-tRNAs (with 1 or more amino acids incorporated), which drop off the ribosome during protein synthesis, or as a result of ribosome stalling. Functionally, catalyzes the release of premature peptidyl moieties from peptidyl-tRNA molecules trapped in stalled 50S ribosomal subunits, and thus maintains levels of free tRNAs and 50S ribosomes. The protein is Peptidyl-tRNA hydrolase of Tropheryma whipplei (strain Twist) (Whipple's bacillus).